Here is a 114-residue protein sequence, read N- to C-terminus: Protein ORF3 (114 aa).

Hydrophobic regions lie at residues C6–C22 and A33–L53. The segment at V28–P68 is interaction with host HPX. Positions V48–P72 are interaction with the capsid protein. S71 is modified (phosphoserine; by host). A homodimerization, and interaction with host AMBP/bikunin region spans residues P72–R114. The segment at L91 to R114 is disordered. Residues R95–V104 are interaction with host SRC, HCK, FYN, PIK3R3 and GRB2. The short motif at P96–P99 is the PTAP/PSAP motif element.

The protein belongs to the hepevirus ORF3 protein family. Forms homooligomers. Interacts with host SRC, HCK, FYN, PIK3R3 and GRB2 (via SH3 domain); binding does not activate the kinases. Interacts with host AMBP/bikunin and AMBP/alpha-1-microglobulin peptides. Interacts with host HPX/hemopexin. Interacts (when phosphorylated) with capsid protein ORF2. Interacts with host TSG101; this interaction plays a role in viral release from the host cell. Interacts with host SIRPA; this interaction down-regulates the phosphorylation of host IRF3. In terms of processing, palmitoylated in the N-terminus.

It localises to the host endoplasmic reticulum membrane. The protein resides in the host cytoplasm. The protein localises to the host cytoskeleton. It is found in the virion. Its subcellular location is the host cell membrane. In terms of biological role, small multifunctional phosphoprotein involved in virion morphogenesis, egress and counteracting host innate immunity. Plays critical roles in the final steps of viral release by interacting with host TSG101, a member of the vacuolar protein-sorting pathway and using other cellular host proteins involved in vesicle formation pathway. Also acts as a viroporin and forms ion conductive pores allowing viral particle release. Impairs the generation of type I interferon by down-regulating host TLR3 and TLR7 as well as their downstream signaling pathways. Down-regulates the phosphorylation of host IRF3 via the interaction with host SIRP-alpha, thereby inhibiting IFN-I expression. Interacts with host microtubules. This Homo sapiens (Human) protein is Protein ORF3.